Consider the following 292-residue polypeptide: MGDGGAERDRGPKRREEPGGRSGCRGEHRGAEDLRADTGSTSPREIAGTSASSPAGSRESGGDSDGQQALGETDHCRRILVRDAKGTIREIVLPKGLDLDRPKRTRTSFTAEQLYRLEMEFQRCQYVVGRERTELARQLNLSETQVKVWFQNRRTKQKKDQSRDLEKRASSSAFEAFATSNVLRLLEQGRLLSVPRAPSLLALSPGLPGLTAGHRGTSLGDPRNSSQRLNPMPSASASSPLPPPLPAVCFSAAPLLDLPASYKLGSSAFEPYSRLEQQKVGSPGQSDKKADI.

Residues 1-36 (MGDGGAERDRGPKRREEPGGRSGCRGEHRGAEDLRA) are compositionally biased toward basic and acidic residues. The disordered stretch occupies residues 1 to 74 (MGDGGAERDR…DGQQALGETD (74 aa)). The segment covering 38 to 55 (TGSTSPREIAGTSASSPA) has biased composition (polar residues). The homeobox DNA-binding region spans 102–161 (PKRTRTSFTAEQLYRLEMEFQRCQYVVGRERTELARQLNLSETQVKVWFQNRRTKQKKDQ). The segment at 212-241 (AGHRGTSLGDPRNSSQRLNPMPSASASSPL) is disordered.

The protein belongs to the EMX homeobox family.

The protein localises to the nucleus. Functionally, transcription factor that may function in dorsoventral specification of the forebrain. Regulates the expression of Wnt signaling antagonists including the expression of a truncated TCF7L2 isoform that cannot bind CTNNB1 and acts therefore as a potent dominant-negative Wnt antagonist. Plays a crucial role in eye development and, in particular, in the specification of the ventral optic vesicle. May be a regulator of axial polarization in the retina. The sequence is that of Ventral anterior homeobox 2 (Vax2) from Rattus norvegicus (Rat).